Reading from the N-terminus, the 332-residue chain is Large ribosomal subunit protein mL44 (332 aa).

Residues 1 to 30 (MASGLVRLLQQGHRCLLAPVAPKLVPPVRG) constitute a mitochondrion transit peptide. The region spanning 86-228 (DLLKTAFVNS…LITQMTGKEL (143 aa)) is the RNase III domain. The DRBM domain maps to 236–306 (NPMGLLVEEL…ARVALRKLYG (71 aa)).

This sequence belongs to the ribonuclease III family. Mitochondrion-specific ribosomal protein mL44 subfamily. In terms of assembly, component of the mitochondrial large ribosomal subunit (mt-LSU). Mature mammalian 55S mitochondrial ribosomes consist of a small (28S) and a large (39S) subunit. The 28S small subunit contains a 12S ribosomal RNA (12S mt-rRNA) and 30 different proteins. The 39S large subunit contains a 16S rRNA (16S mt-rRNA), a copy of mitochondrial valine transfer RNA (mt-tRNA(Val)), which plays an integral structural role, and 52 different proteins.

The protein localises to the mitochondrion. Component of the 39S subunit of mitochondrial ribosome. May have a function in the assembly/stability of nascent mitochondrial polypeptides exiting the ribosome. In Homo sapiens (Human), this protein is Large ribosomal subunit protein mL44 (MRPL44).